A 130-amino-acid polypeptide reads, in one-letter code: Small ribosomal subunit protein uS8 (130 aa).

Belongs to the universal ribosomal protein uS8 family. As to quaternary structure, part of the 30S ribosomal subunit.

Its function is as follows. One of the primary rRNA binding proteins, it binds directly to 16S rRNA central domain where it helps coordinate assembly of the platform of the 30S subunit. The sequence is that of Small ribosomal subunit protein uS8 from Korarchaeum cryptofilum (strain OPF8).